Here is a 242-residue protein sequence, read N- to C-terminus: Triosephosphate isomerase (242 aa).

Position 9–11 (9–11 (NWK)) interacts with substrate. Residue His-96 is the Electrophile of the active site. The Proton acceptor role is filled by Glu-165. Substrate is bound by residues Gly-171, Ser-204, and 225-226 (GG).

This sequence belongs to the triosephosphate isomerase family. In terms of assembly, homodimer.

It localises to the cytoplasm. The enzyme catalyses D-glyceraldehyde 3-phosphate = dihydroxyacetone phosphate. It participates in carbohydrate biosynthesis; gluconeogenesis. It functions in the pathway carbohydrate degradation; glycolysis; D-glyceraldehyde 3-phosphate from glycerone phosphate: step 1/1. Functionally, involved in the gluconeogenesis. Catalyzes stereospecifically the conversion of dihydroxyacetone phosphate (DHAP) to D-glyceraldehyde-3-phosphate (G3P). The chain is Triosephosphate isomerase from Synechocystis sp. (strain ATCC 27184 / PCC 6803 / Kazusa).